We begin with the raw amino-acid sequence, 151 residues long: UPF0208 membrane protein KPN78578_26420 (151 aa).

2 helical membrane-spanning segments follow: residues 46 to 65 (YAIRIMPPIAIFTLCWQIAL) and 69 to 91 (LGPAVATALFALSLPMQGLWWLG).

This sequence belongs to the UPF0208 family.

Its subcellular location is the cell inner membrane. The protein is UPF0208 membrane protein KPN78578_26420 of Klebsiella pneumoniae subsp. pneumoniae (strain ATCC 700721 / MGH 78578).